We begin with the raw amino-acid sequence, 1776 residues long: 6-methylsalicylic acid synthase (1776 aa).

The span at 1–18 shows a compositional bias: low complexity; the sequence is MHSVSPSTYPSGGTSPAP. Positions 1-26 are disordered; the sequence is MHSVSPSTYPSGGTSPAPADTPGTEY. The region spanning 32 to 457 is the Ketosynthase family 3 (KS3) domain; sequence SNDVAVVGMA…GTVSHAVIEE (426 aa). Active-site for beta-ketoacyl synthase activity residues include cysteine 204, histidine 339, and histidine 379. The interval 567–880 is malonyl-CoA:ACP transacylase (MAT) domain; it reads VWVFSGHGAQ…IAQLHCRGAE (314 aa). An N-terminal hotdog fold region spans residues 925 to 1044; the sequence is HTLLGQRIPV…AYWDRKVLGS (120 aa). Residues 925 to 1196 form a dehydratase (DH) domain region; that stretch reads HTLLGQRIPV…FTAMRFSEIE (272 aa). Residues 925-1201 form the PKS/mFAS DH domain; sequence HTLLGQRIPV…FSEIEGTPGV (277 aa). Histidine 957 (proton acceptor; for dehydratase activity) is an active-site residue. Residues 1058–1201 are C-terminal hotdog fold; that stretch reads TTKLADNFSI…FSEIEGTPGV (144 aa). Aspartate 1113 acts as the Proton donor; for dehydratase activity in catalysis. A product template (PT) domain region spans residues 1205-1657; it reads MESLVHQIAW…LRSLAIDDGE (453 aa). The Carrier domain occupies 1700 to 1774; it reads AYLDEKIRGC…HLVVWFAEKI (75 aa). The residue at position 1734 (serine 1734) is an O-(pantetheine 4'-phosphoryl)serine.

Its subcellular location is the cytoplasm. The protein localises to the cytosol. The catalysed reaction is 3 malonyl-CoA + acetyl-CoA + NADPH + 3 H(+) = 6-methylsalicylate + 3 CO2 + NADP(+) + 4 CoA + H2O. The protein operates within mycotoxin biosynthesis; patulin biosynthesis. Its function is as follows. 6-methylsalicylic acid synthase; part of the gene cluster that mediates the biosynthesis of patulin, an acetate-derived tetraketide mycotoxin produced by several fungal species that shows antimicrobial properties against several bacteria. PatK catalyzes the first step of the pathway which is the synthesis of 6-methylsalicylic acid via condensation of 1 acetate and 3 malonate units. The pathway begins with the synthesis of 6-methylsalicylic acid by the polyketide synthase (PKS) patK via condensation of acetate and malonate units. The 6-methylsalicylic acid decarboxylase patG then catalyzes the decarboxylation of 6-methylsalicylic acid to yield m-cresol (also known as 3-methylphenol). These first reactions occur in the cytosol. The intermediate m-cresol is then transported into the endoplasmic reticulum where the cytochrome P450 monooxygenase patH converts it to m-hydroxybenzyl alcohol, which is further converted to gentisyl alcohol by the cytochrome P450 monooxygenase patI. The oxidoreductases patJ and patO further convert gentisyl alcohol to isoepoxydon in the vacuole. PatN catalyzes then the transformation of isoepoxydon into phyllostine. The cluster protein patF is responsible for the conversion from phyllostine to neopatulin whereas the alcohol dehydrogenase patD converts neopatulin to E-ascladiol. The steps between isoepoxydon and E-ascladiol occur in the cytosol, and E-ascladiol is probably secreted to the extracellular space by one of the cluster-specific transporters patC or patM. Finally, the secreted patulin synthase patE catalyzes the conversion of E-ascladiol to patulin. In Penicillium expansum (Blue mold rot fungus), this protein is 6-methylsalicylic acid synthase.